The following is a 287-amino-acid chain: Troponin T, cardiac muscle (287 aa).

Composition is skewed to acidic residues over residues methionine 1–glycine 31 and glutamate 44–valine 59. Disordered regions lie at residues methionine 1–valine 85 and lysine 124–lysine 208. Serine 2 carries the N-acetylserine modification. Serine 2 carries the post-translational modification Phosphoserine; by CK2. A compositionally biased stretch (pro residues) spans alanine 66–isoleucine 79. 2 stretches are compositionally biased toward basic and acidic residues: residues lysine 124–arginine 173 and glutamine 192–lysine 208. Position 197 is a phosphoserine; by PKC/PRKCA (serine 197). A Phosphothreonine; by PKC/PRKCA and RAF1 modification is found at threonine 202. Threonine 283 is modified (phosphothreonine; by PKC/PRKCA).

Belongs to the troponin T family. Post-translationally, phosphorylation at Thr-202 by PRKCA induces significant reduction in myofilament calcium sensitivity and actomyosin ATPase activity.

Functionally, troponin T is the tropomyosin-binding subunit of troponin, the thin filament regulatory complex which confers calcium-sensitivity to striated muscle actomyosin ATPase activity. The protein is Troponin T, cardiac muscle (TNNT2) of Ovis aries (Sheep).